Reading from the N-terminus, the 1430-residue chain is 3'-5' RNA helicase YTHDC2 (1430 aa).

The interval 1 to 37 (MSRPSSVSPRQPAPGGGGGGGPSPCGPGGGGRAKGLK) is disordered. The span at 14 to 33 (PGGGGGGGPSPCGPGGGGRA) shows a compositional bias: gly residues. Residues 38-106 (DIRIDEEVKI…NRYLTVKKKD (69 aa)) form the R3H domain. The Helicase ATP-binding domain occupies 203 to 369 (VKIIKENKVV…FGSCPVIYIQ (167 aa)). Position 216–223 (216–223 (GETGSGKT)) interacts with ATP. A DEAH box motif is present at residues 316 to 319 (DEVH). ANK repeat units follow at residues 506–538 (TSAT…SKAS) and 539–571 (NGWM…FGNL). Residues 612-784 (LLYNICHSCD…ELCLHTKLLA (173 aa)) enclose the Helicase C-terminal domain. Residues serine 1089, serine 1090, and serine 1092 each carry the phosphoserine modification. Polar residues predominate over residues 1164-1174 (EQSAGLQQPSG). The disordered stretch occupies residues 1164 to 1288 (EQSAGLQQPS…SPSPRPNMPV (125 aa)). Low complexity predominate over residues 1191-1200 (SSWRSNNSRK). Serine 1202 bears the Phosphoserine mark. Over residues 1231–1249 (KYKDRGILHPKRGTEDRSD) the composition is skewed to basic and acidic residues. Positions 1250 to 1264 (QSSLKSTDSSSYPSP) are enriched in low complexity. A phosphoserine mark is found at serine 1263, serine 1267, and serine 1281. A YTH domain is found at 1288–1418 (VRYFIMKSSN…LVGEQLLQLW (131 aa)). RNA contacts are provided by residues 1294–1296 (KSS), tryptophan 1310, and tryptophan 1360.

The protein belongs to the DEAD box helicase family. DEAH subfamily. In terms of assembly, interacts with MEIOC; binds transcripts that regulate the mitotic cell cycle inhibiting progression into metaphase, thereby allowing meiotic prophase to proceed normally. Interacts (via ANK repeats) with XRN1. Interacts with ZCCHC4. Associates with the small ribosomal subunit. Interacts with RBM46. Expressed in testis. Not detected in spermatogonia next to the tubule wall but is strongly expressed in spermatocytes, suggesting that it is up-regulated in germ cells upon entry into meiosis.

The protein resides in the cytoplasm. It is found in the perinuclear region. The enzyme catalyses ATP + H2O = ADP + phosphate + H(+). Functionally, 3'-5' RNA helicase that plays a key role in the male and female germline by promoting transition from mitotic to meiotic divisions in stem cells. Specifically recognizes and binds N6-methyladenosine (m6A)-containing RNAs, a modification present at internal sites of mRNAs and some non-coding RNAs that plays a role in the efficiency of RNA processing and stability. Essential for ensuring a successful progression of the meiotic program in the germline by regulating the level of m6A-containing RNAs. Acts by binding and promoting degradation of m6A-containing mRNAs: the 3'-5' RNA helicase activity is required for this process and RNA degradation may be mediated by XRN1 exoribonuclease. Required for both spermatogenesis and oogenesis. The protein is 3'-5' RNA helicase YTHDC2 of Homo sapiens (Human).